Here is a 412-residue protein sequence, read N- to C-terminus: Phosphoglycerate kinase (412 aa).

Substrate contacts are provided by residues 22-24 (DFN), Arg37, 60-63 (HLGK), Arg120, and Arg172. ATP is bound by residues Lys223, Gly310, Glu341, and 368-371 (GGDS).

It belongs to the phosphoglycerate kinase family. In terms of assembly, monomer.

The protein resides in the cytoplasm. It catalyses the reaction (2R)-3-phosphoglycerate + ATP = (2R)-3-phospho-glyceroyl phosphate + ADP. It participates in carbohydrate degradation; glycolysis; pyruvate from D-glyceraldehyde 3-phosphate: step 2/5. The chain is Phosphoglycerate kinase from Spiroplasma citri.